A 510-amino-acid polypeptide reads, in one-letter code: 2,3-bisphosphoglycerate-independent phosphoglycerate mutase (510 aa).

Mn(2+) contacts are provided by D12 and S62. S62 serves as the catalytic Phosphoserine intermediate. Substrate-binding positions include H123, 153–154 (RD), R185, R191, 260–263 (RPDR), and K335. Mn(2+) contacts are provided by D402, H406, D443, H444, and H461.

This sequence belongs to the BPG-independent phosphoglycerate mutase family. In terms of assembly, monomer. The cofactor is Mn(2+).

It carries out the reaction (2R)-2-phosphoglycerate = (2R)-3-phosphoglycerate. It participates in carbohydrate degradation; glycolysis; pyruvate from D-glyceraldehyde 3-phosphate: step 3/5. Functionally, catalyzes the interconversion of 2-phosphoglycerate and 3-phosphoglycerate. The chain is 2,3-bisphosphoglycerate-independent phosphoglycerate mutase from Listeria welshimeri serovar 6b (strain ATCC 35897 / DSM 20650 / CCUG 15529 / CIP 8149 / NCTC 11857 / SLCC 5334 / V8).